Reading from the N-terminus, the 156-residue chain is MRCPYCGHLEDRVVDSRETQDGQATRRRRACLSCERRFTTYERIEDVLPQVVKKDGRREAFDRAKIVEGVATACQKRPVSAEQVEALVSAVERQVQELGEREIRTAVIGEAVMQRLRTLDEVAYVRFASVYRAFRDVGEFMTELAGLARKDGGEER.

The segment at 3 to 34 is a zinc-finger region; that stretch reads CPYCGHLEDRVVDSRETQDGQATRRRRACLSC. The 91-residue stretch at 49-139 folds into the ATP-cone domain; the sequence is PQVVKKDGRR…VYRAFRDVGE (91 aa).

The protein belongs to the NrdR family. Zn(2+) serves as cofactor.

In terms of biological role, negatively regulates transcription of bacterial ribonucleotide reductase nrd genes and operons by binding to NrdR-boxes. The sequence is that of Transcriptional repressor NrdR from Anaeromyxobacter dehalogenans (strain 2CP-C).